Here is a 375-residue protein sequence, read N- to C-terminus: Antichymotrypsin-2 (375 aa).

It belongs to the serpin family. Hemolymph.

It is found in the secreted. The sequence is that of Antichymotrypsin-2 from Bombyx mori (Silk moth).